A 175-amino-acid chain; its full sequence is PE-PGRS family protein PE_PGRS8 (175 aa).

Residues 1–93 (MSFVIAAPEA…AGSYAAAEAA (93 aa)) enclose the PE domain.

The protein belongs to the mycobacterial PE family. PGRS subfamily.

The protein localises to the secreted. It localises to the cell wall. The protein resides in the cell surface. The sequence is that of PE-PGRS family protein PE_PGRS8 from Mycobacterium tuberculosis (strain ATCC 25618 / H37Rv).